A 555-amino-acid polypeptide reads, in one-letter code: Glutamine--tRNA ligase (555 aa).

The 'HIGH' region motif lies at 34–44; the sequence is PEPNGYLHIGH. ATP contacts are provided by residues 35-37 and 41-47; these read EPN and HIGHAKS. Aspartate 67 and tyrosine 212 together coordinate L-glutamine. Residues threonine 231, 261–262, and 269–271 contribute to the ATP site; these read RL and MSK. A 'KMSKS' region motif is present at residues 268 to 272; sequence VMSKR. Residues 317–324 form an interaction with tRNA region; sequence TKQDNTIE.

The protein belongs to the class-I aminoacyl-tRNA synthetase family. In terms of assembly, monomer.

It is found in the cytoplasm. The catalysed reaction is tRNA(Gln) + L-glutamine + ATP = L-glutaminyl-tRNA(Gln) + AMP + diphosphate. The polypeptide is Glutamine--tRNA ligase (Salmonella newport (strain SL254)).